We begin with the raw amino-acid sequence, 274 residues long: tRNA-cytidine(32) 2-sulfurtransferase (274 aa).

A PP-loop motif motif is present at residues 40 to 45 (SGGKDS). Positions 115, 118, and 206 each coordinate [4Fe-4S] cluster.

Belongs to the TtcA family. In terms of assembly, homodimer. Mg(2+) is required as a cofactor. The cofactor is [4Fe-4S] cluster.

Its subcellular location is the cytoplasm. The enzyme catalyses cytidine(32) in tRNA + S-sulfanyl-L-cysteinyl-[cysteine desulfurase] + AH2 + ATP = 2-thiocytidine(32) in tRNA + L-cysteinyl-[cysteine desulfurase] + A + AMP + diphosphate + H(+). It functions in the pathway tRNA modification. In terms of biological role, catalyzes the ATP-dependent 2-thiolation of cytidine in position 32 of tRNA, to form 2-thiocytidine (s(2)C32). The sulfur atoms are provided by the cysteine/cysteine desulfurase (IscS) system. The protein is tRNA-cytidine(32) 2-sulfurtransferase of Pseudomonas fluorescens (strain SBW25).